Here is a 310-residue protein sequence, read N- to C-terminus: Methionyl-tRNA formyltransferase (310 aa).

109–112 (SLLP) lines the (6S)-5,6,7,8-tetrahydrofolate pocket.

The protein belongs to the Fmt family.

The enzyme catalyses L-methionyl-tRNA(fMet) + (6R)-10-formyltetrahydrofolate = N-formyl-L-methionyl-tRNA(fMet) + (6S)-5,6,7,8-tetrahydrofolate + H(+). In terms of biological role, attaches a formyl group to the free amino group of methionyl-tRNA(fMet). The formyl group appears to play a dual role in the initiator identity of N-formylmethionyl-tRNA by promoting its recognition by IF2 and preventing the misappropriation of this tRNA by the elongation apparatus. The chain is Methionyl-tRNA formyltransferase from Pseudomonas entomophila (strain L48).